The chain runs to 591 residues: Negative elongation factor D (591 aa).

The segment at 1-44 (MAGPAPGTIMGEDYFGNASEWGEEADGGQHQEDDSGEGEDDAEV) is disordered. The span at 34-44 (DSGEGEDDAEV) shows a compositional bias: acidic residues.

The protein belongs to the NELF-D family. In terms of assembly, the NELF complex is composed of NELFA, NELFB, NELFCD and NELFE; NELFA and NELFCD form a stable subcomplex that binds primarily through NELFCD to the N-terminus of NELFB. Binds RNA which may help to stabilize the NELF complex on nucleic acid. In vitro, the NELFA:NELFCD subcomplex binds to ssDNA and ssRNA in a sequence- and structure-dependent manner. Interacts with ARAF1. Interacts with PCF11. Interacts with NELFB. Interacts with KAT8.

The protein resides in the nucleus. In terms of biological role, essential component of the NELF complex, a complex that negatively regulates the elongation of transcription by RNA polymerase II. The NELF complex, which acts via an association with the DSIF complex and causes transcriptional pausing, is counteracted by the P-TEFb kinase complex. The sequence is that of Negative elongation factor D (Nelfcd) from Mus musculus (Mouse).